The primary structure comprises 418 residues: BTB and MATH domain-containing protein 41 (418 aa).

The segment at 1–33 (MEINNGAQPENAAVSIPSRSPSGKSEKRKSPSI) is disordered. An MATH domain is found at 45–173 (SFTNYWSVER…NDILTIGCEL (129 aa)). The 62-residue stretch at 232-293 (SDFIIVASCG…TLDVLLRHMY (62 aa)) folds into the BTB domain.

As to quaternary structure, interacts with cul-3.

It functions in the pathway protein modification; protein ubiquitination. Probable substrate-specific adapter of an E3 ubiquitin-protein ligase complex which mediates the ubiquitination and subsequent proteasomal degradation of target proteins. The polypeptide is BTB and MATH domain-containing protein 41 (bath-41) (Caenorhabditis elegans).